The primary structure comprises 81 residues: Omega-conotoxin-like TxMKLT1-0223 (81 aa).

A signal peptide spans 1–22 (MKLTCMMIVAVLFLTAWTFVTA). Residues 23–52 (VPHSSNALENLYLKARHEMENPEASKLNTR) constitute a propeptide that is removed on maturation. Cystine bridges form between cysteine 55/cysteine 72, cysteine 62/cysteine 76, and cysteine 71/cysteine 80.

Belongs to the conotoxin O1 superfamily. Expressed by the venom duct.

The protein resides in the secreted. In terms of biological role, omega-conotoxins act at presynaptic membranes, they bind and block voltage-gated calcium channels (Cav). The sequence is that of Omega-conotoxin-like TxMKLT1-0223 from Conus textile (Cloth-of-gold cone).